The following is a 217-amino-acid chain: Phosphoribosylformylglycinamidine synthase subunit PurQ (217 aa).

Residues 2-217 form the Glutamine amidotransferase type-1 domain; the sequence is NIGIIVFPGS…GKSILSTLLS (216 aa). C86 serves as the catalytic Nucleophile. Active-site residues include H194 and E196.

In terms of assembly, part of the FGAM synthase complex composed of 1 PurL, 1 PurQ and 2 PurS subunits.

The protein localises to the cytoplasm. It catalyses the reaction N(2)-formyl-N(1)-(5-phospho-beta-D-ribosyl)glycinamide + L-glutamine + ATP + H2O = 2-formamido-N(1)-(5-O-phospho-beta-D-ribosyl)acetamidine + L-glutamate + ADP + phosphate + H(+). It carries out the reaction L-glutamine + H2O = L-glutamate + NH4(+). It functions in the pathway purine metabolism; IMP biosynthesis via de novo pathway; 5-amino-1-(5-phospho-D-ribosyl)imidazole from N(2)-formyl-N(1)-(5-phospho-D-ribosyl)glycinamide: step 1/2. In terms of biological role, part of the phosphoribosylformylglycinamidine synthase complex involved in the purines biosynthetic pathway. Catalyzes the ATP-dependent conversion of formylglycinamide ribonucleotide (FGAR) and glutamine to yield formylglycinamidine ribonucleotide (FGAM) and glutamate. The FGAM synthase complex is composed of three subunits. PurQ produces an ammonia molecule by converting glutamine to glutamate. PurL transfers the ammonia molecule to FGAR to form FGAM in an ATP-dependent manner. PurS interacts with PurQ and PurL and is thought to assist in the transfer of the ammonia molecule from PurQ to PurL. The polypeptide is Phosphoribosylformylglycinamidine synthase subunit PurQ (Prochlorococcus marinus (strain NATL2A)).